Consider the following 253-residue polypeptide: Triosephosphate isomerase (253 aa).

9 to 11 (NWK) is a binding site for substrate. H95 acts as the Electrophile in catalysis. E167 (proton acceptor) is an active-site residue. Residues G173, S213, and 234 to 235 (GG) contribute to the substrate site. S213 carries the phosphoserine modification.

This sequence belongs to the triosephosphate isomerase family. Homodimer.

The protein resides in the cytoplasm. The catalysed reaction is D-glyceraldehyde 3-phosphate = dihydroxyacetone phosphate. The protein operates within carbohydrate biosynthesis; gluconeogenesis. It functions in the pathway carbohydrate degradation; glycolysis; D-glyceraldehyde 3-phosphate from glycerone phosphate: step 1/1. Involved in the gluconeogenesis. Catalyzes stereospecifically the conversion of dihydroxyacetone phosphate (DHAP) to D-glyceraldehyde-3-phosphate (G3P). The sequence is that of Triosephosphate isomerase from Bacillus velezensis (strain DSM 23117 / BGSC 10A6 / LMG 26770 / FZB42) (Bacillus amyloliquefaciens subsp. plantarum).